Here is a 37-residue protein sequence, read N- to C-terminus: Large ribosomal subunit protein bL36 (37 aa).

It belongs to the bacterial ribosomal protein bL36 family.

In Gloeobacter violaceus (strain ATCC 29082 / PCC 7421), this protein is Large ribosomal subunit protein bL36.